Consider the following 190-residue polypeptide: Nucleoside triphosphate pyrophosphatase (190 aa).

Catalysis depends on Asp69, which acts as the Proton acceptor.

Belongs to the Maf family. Requires a divalent metal cation as cofactor.

Its subcellular location is the cytoplasm. It carries out the reaction a ribonucleoside 5'-triphosphate + H2O = a ribonucleoside 5'-phosphate + diphosphate + H(+). It catalyses the reaction a 2'-deoxyribonucleoside 5'-triphosphate + H2O = a 2'-deoxyribonucleoside 5'-phosphate + diphosphate + H(+). Nucleoside triphosphate pyrophosphatase. May have a dual role in cell division arrest and in preventing the incorporation of modified nucleotides into cellular nucleic acids. This Helicobacter pylori (strain G27) protein is Nucleoside triphosphate pyrophosphatase.